The following is a 150-amino-acid chain: MSKPKAKKIFLGVDYGQRRIGLAYAASPLFISLPIGFIEAGKTLEATAQSLAKIILEREVSCVVLGNPIPMQIGQKSSLQEEILKISSLIQEFCHVDVVLWDERLSSAQAERMLKCDCGLSRKQRKGKTDSVAATLILTNFLESSPSIRF.

Belongs to the YqgF nuclease family.

It is found in the cytoplasm. Its function is as follows. Could be a nuclease involved in processing of the 5'-end of pre-16S rRNA. The polypeptide is Putative pre-16S rRNA nuclease (Chlamydia felis (strain Fe/C-56) (Chlamydophila felis)).